We begin with the raw amino-acid sequence, 847 residues long: MGSKPNAMKNVVAMAAVSALFLLGFLVCSVSGSVSYDSRAITINGKRRILISGSIHYPRSTPEMWPDLIRKAKEGGLDVIQTYVFWNGHEPSPGKYYFEGNYDLVKFVKLVQQSGLYLHLRIGPYVCAEWNFGGFPVWLKYIPGISFRTDNGPFKAQMQRFTTKIVNMMKAERLFESQGGPIILSQIENEYGPMEYELGAPGRSYTNWAAKMAVGLGTGVPWVMCKQDDAPDPIINACNGFYCDYFSPNKAYKPKMWTEAWTGWFTKFGGPVPYRPAEDMAFSVARFIQKGGSFINYYMYHGGTNFGRTAGGPFIATSYDYDAPLDEYGLERQPKWGHLKDLHRAIKLCEPALVSGEPTRMPLGNYQEAHVYKSKSGACSAFLANYNPKSYAKVSFGNNHYNLPPWSISILPDCKNTVYNTARVGAQTSRMKMVRVPVHGGLSWQAYNEDPSTYIDESFTMVGLVEQINTTRDTSDYLWYMTDVKVDANEGFLRNGDLPTLTVLSAGHAMHVFINGQLSGSAYGSLDSPKLTFRKGVNLRAGFNKIAILSIAVGLPNVGPHFETWNAGVLGPVSLNGLNGGRRDLSWQKWTYKVGLKGESLSLHSLSGSSSVEWAEGAFVAQKQPLTWYKTTFSAPAGDSPLAVDMGSMGKGQIWINGQSLGRHWPAYKAVGSCSECSYTGTFREDKCLRNCGEASQRWYHVPRSWLKPSGNLLVVFEEWGGDPNGITLVRREVDSVCADIYEWQSTLVNYQLHASGKVNKPLHPKAHLQCGPGQKITTVKFASFGTPEGTCGSYRQGSCHAHHSYDAFNKLCVGQNWCSVTVAPEMFGGDPCPNVMKKLAVEAVCA.

The N-terminal stretch at 1 to 32 is a signal peptide; it reads MGSKPNAMKNVVAMAAVSALFLLGFLVCSVSG. Glu190 acts as the Proton donor in catalysis. Catalysis depends on Glu259, which acts as the Nucleophile. An N-linked (GlcNAc...) asparagine glycan is attached at Asn469. The SUEL-type lectin domain maps to 761 to 847; that stretch reads KPLHPKAHLQ…KKLAVEAVCA (87 aa).

Belongs to the glycosyl hydrolase 35 family. Ubiquitous, at low levels.

The protein resides in the secreted. It localises to the extracellular space. It is found in the apoplast. The enzyme catalyses Hydrolysis of terminal non-reducing beta-D-galactose residues in beta-D-galactosides.. In Arabidopsis thaliana (Mouse-ear cress), this protein is Beta-galactosidase 1 (BGAL1).